The sequence spans 151 residues: IFN signaling evasion protein OPG029 (151 aa).

Belongs to the orthopoxvirus OPG029 family. As to quaternary structure, interacts with host TANK, TBKBP1 and AZI2; these interactions prevent interferon production. Interacts with host STAT2.

Its function is as follows. Prevents establishment of cellular antiviral state by blocking virus-induced phosphorylation and activation of interferon regulatory factors 3/IRF3 and 7/IRF7, transcription factors critical for the induction of interferons alpha and beta. This blockage is produced through the inhibition of host TBK1, by binding host TBK1 adapter proteins TBKBP1 and AZI2, thereby producing a strong inhibition of the phosphorylation and activation of IRF3 and IRF7. Also acts as an inhibitor of the cellular response to type I IFN by interacting with host STAT2. Mechanistically, exerts its inhibitory effect after host ISGF3 complex (composed of STAT1, STAT2 and IRF9) binding to the interferon stimulated response element (ISRE). The protein is IFN signaling evasion protein OPG029 (OPG029) of Vaccinia virus (strain Western Reserve) (VACV).